A 176-amino-acid chain; its full sequence is Late lactation protein (176 aa).

A signal peptide spans 1 to 18 (MKVLFFTIALSLFSILHA). The cysteines at positions 78 and 171 are disulfide-linked.

Belongs to the calycin superfamily. Lipocalin family. As to expression, mammary gland. Secreted in milk.

It is found in the secreted. Probably serves a role in the transport of a small ligand released during the hydrolysis of milk fat. The protein is Late lactation protein of Trichosurus vulpecula (Brush-tailed possum).